The chain runs to 133 residues: Small ribosomal subunit protein uS11 (133 aa).

This sequence belongs to the universal ribosomal protein uS11 family. Part of the 30S ribosomal subunit. Interacts with proteins S7 and S18. Binds to IF-3.

In terms of biological role, located on the platform of the 30S subunit, it bridges several disparate RNA helices of the 16S rRNA. Forms part of the Shine-Dalgarno cleft in the 70S ribosome. This is Small ribosomal subunit protein uS11 from Burkholderia pseudomallei (strain 1106a).